Reading from the N-terminus, the 379-residue chain is Cytochrome b (379 aa).

4 helical membrane passes run 33–53, 77–98, 113–133, and 178–198; these read FGSL…FLAM, WMIR…FIHI, WNIG…GYVL, and FFAF…VHLL. Heme b-binding residues include H83 and H97. Positions 182 and 196 each coordinate heme b. H201 is a binding site for a ubiquinone. A run of 4 helical transmembrane segments spans residues 226–246, 288–308, 320–340, and 347–367; these read MKDI…VLFY, LGGV…PMMH, LSQC…WIGG, and FIMI…IIMP.

Belongs to the cytochrome b family. As to quaternary structure, the cytochrome bc1 complex contains 11 subunits: 3 respiratory subunits (MT-CYB, CYC1 and UQCRFS1), 2 core proteins (UQCRC1 and UQCRC2) and 6 low-molecular weight proteins (UQCRH/QCR6, UQCRB/QCR7, UQCRQ/QCR8, UQCR10/QCR9, UQCR11/QCR10 and a cleavage product of UQCRFS1). This cytochrome bc1 complex then forms a dimer. It depends on heme b as a cofactor.

It localises to the mitochondrion inner membrane. Component of the ubiquinol-cytochrome c reductase complex (complex III or cytochrome b-c1 complex) that is part of the mitochondrial respiratory chain. The b-c1 complex mediates electron transfer from ubiquinol to cytochrome c. Contributes to the generation of a proton gradient across the mitochondrial membrane that is then used for ATP synthesis. This chain is Cytochrome b (MT-CYB), found in Massoutiera mzabi (Mzab gundi).